The chain runs to 294 residues: Equatorin (294 aa).

A signal peptide spans 1 to 14 (MNFILFIFIPGVFS). At 15–181 (LKSSTLKPTI…QPDLEDLKIK (167 aa)) the chain is on the vesicular side. A glycan (N-linked (GlcNAc...) asparagine) is linked at Asn76. Residues 107-126 (KSTIEEETTTSEPSHKNIQR) form a disordered region. N-linked (GlcNAc...) asparagine glycosylation occurs at Asn143. Residues 182-202 (IMLGISLMTLLLFVVLLAFCS) traverse the membrane as a helical segment. Over 203–294 (ATLYKLRHLS…MHENDESVTR (92 aa)) the chain is Cytoplasmic.

In terms of assembly, interacts with SNAP25. Post-translationally, highly N- and O-glycosylated; contains sialic acid. As to expression, isoform 1 is highly expressed in testis. Isoform 2 is expressed at low levels in skin and blood.

Its subcellular location is the cytoplasmic vesicle. The protein localises to the secretory vesicle. It localises to the acrosome membrane. The protein resides in the acrosome inner membrane. It is found in the acrosome outer membrane. In terms of biological role, acrosomal membrane-anchored protein involved in the process of fertilization and in acrosome biogenesis. This is Equatorin (EQTN) from Homo sapiens (Human).